A 371-amino-acid polypeptide reads, in one-letter code: Protein NDRG2 (371 aa).

The interval 1 to 21 is disordered; the sequence is MAELQEVQITEEKPLLPGQTP. Ala-2 carries the N-acetylalanine modification. Thr-20 bears the Phosphothreonine mark. Residues Ser-326 and Ser-328 each carry the phosphoserine modification. At Thr-330 the chain carries Phosphothreonine. At Ser-332 the chain carries Phosphoserine. Thr-334 carries the post-translational modification Phosphothreonine. Residues 334–371 form a disordered region; sequence TSAASVDGNRSRSRTLSQSSESGTLSSGPPGHTMEVSC. Ser-335, Ser-338, and Ser-344 each carry phosphoserine. Low complexity predominate over residues 347–361; sequence RTLSQSSESGTLSSG. Position 348 is a phosphothreonine (Thr-348). A phosphoserine mark is found at Ser-350, Ser-352, Ser-353, and Ser-355. Phosphothreonine is present on Thr-357. Ser-370 is subject to Phosphoserine.

It belongs to the NDRG family. Interacts with CTNNB1.

The protein localises to the cytoplasm. Its subcellular location is the perinuclear region. It is found in the cell projection. It localises to the growth cone. Its function is as follows. Contributes to the regulation of the Wnt signaling pathway. Down-regulates CTNNB1-mediated transcriptional activation of target genes, such as CCND1, and may thereby act as tumor suppressor. May be involved in dendritic cell and neuron differentiation. The chain is Protein NDRG2 (NDRG2) from Pongo abelii (Sumatran orangutan).